A 537-amino-acid polypeptide reads, in one-letter code: Tyrosine-protein kinase Fyn (537 aa).

Gly2 carries the N-myristoyl glycine lipid modification. Residues Cys3 and Cys6 are each lipidated (S-palmitoyl cysteine). Thr12 is subject to Phosphothreonine; by PKC. Residues Leu14–Thr35 are disordered. Residues Ser21 and Ser26 each carry the phosphoserine modification. Residues Thr82–Ser143 enclose the SH3 domain. The region spanning Trp149–Cys246 is the SH2 domain. Tyr185 is modified (phosphotyrosine). In terms of domain architecture, Protein kinase spans Leu271–Phe524. ATP is bound by residues Leu277–Val285 and Lys299. Catalysis depends on Asp390, which acts as the Proton acceptor. Tyr420 carries the phosphotyrosine; by autocatalysis modification. Tyr531 bears the Phosphotyrosine; by CSK mark.

It belongs to the protein kinase superfamily. Tyr protein kinase family. SRC subfamily. Interacts (via its SH3 domain) with PIK3R1 and PRMT8. Interacts with FYB1, PAG1, and SH2D1A. Interacts with CD79A (tyrosine-phosphorylated form); the interaction increases FYN activity. Interacts (via SH2 domain) with CSF1R (tyrosine phosphorylated). Interacts with TOM1L1 (phosphorylated form). Interacts with KDR (tyrosine phosphorylated). Interacts (via SH3 domain) with KLHL2 (via N-terminus). Interacts with SH2D1A and SLAMF1. Interacts with ITCH; the interaction phosphorylates ITCH and negatively regulates its activity. Interacts with FASLG. Interacts with RUNX3. Interacts with KIT. Interacts with EPHA8; possible downstream effector of EPHA8 in regulation of cell adhesion. Interacts with PTK2/FAK1; this interaction leads to PTK2/FAK1 phosphorylation and activation. Interacts with CAV1; this interaction couples integrins to the Ras-ERK pathway. Interacts with UNC119. Interacts (via SH2 domain) with PTPRH (phosphorylated form). Interacts with PTPRO (phosphorylated form). Interacts with PTPRB (phosphorylated form). Interacts with FYB2. Interacts with DSCAM. Interacts with SKAP1 and FYB1; this interaction promotes the phosphorylation of CLNK. Interacts with NEDD9; in the presence of PTK2. In terms of assembly, (Microbial infection) Interacts (via its SH3 domain) with hepatitis E virus/HEV protein ORF3. Requires Mn(2+) as cofactor. In terms of processing, autophosphorylated at Tyr-420. Phosphorylation on the C-terminal tail at Tyr-531 by CSK maintains the enzyme in an inactive state. PTPRC/CD45 dephosphorylates Tyr-531 leading to activation. Ultraviolet B (UVB) strongly increase phosphorylation at Thr-12 and kinase activity, and promotes translocation from the cytoplasm to the nucleus. Dephosphorylation at Tyr-420 by PTPN2 negatively regulates T-cell receptor signaling. Phosphorylated at tyrosine residues, which can be enhanced by NTN1. Post-translationally, palmitoylated. Palmitoylation at Cys-3 and Cys-6, probably by ZDHHC21, regulates subcellular location. As to expression, isoform 1 is highly expressed in the brain. Isoform 2 is expressed in cells of hemopoietic lineages, especially T-lymphocytes.

The protein resides in the cytoplasm. Its subcellular location is the nucleus. The protein localises to the cell membrane. It localises to the perikaryon. The enzyme catalyses L-tyrosyl-[protein] + ATP = O-phospho-L-tyrosyl-[protein] + ADP + H(+). With respect to regulation, inhibited by phosphorylation of Tyr-531 by leukocyte common antigen and activated by dephosphorylation of this site. Its function is as follows. Non-receptor tyrosine-protein kinase that plays a role in many biological processes including regulation of cell growth and survival, cell adhesion, integrin-mediated signaling, cytoskeletal remodeling, cell motility, immune response and axon guidance. Inactive FYN is phosphorylated on its C-terminal tail within the catalytic domain. Following activation by PKA, the protein subsequently associates with PTK2/FAK1, allowing PTK2/FAK1 phosphorylation, activation and targeting to focal adhesions. Involved in the regulation of cell adhesion and motility through phosphorylation of CTNNB1 (beta-catenin) and CTNND1 (delta-catenin). Regulates cytoskeletal remodeling by phosphorylating several proteins including the actin regulator WAS and the microtubule-associated proteins MAP2 and MAPT. Promotes cell survival by phosphorylating AGAP2/PIKE-A and preventing its apoptotic cleavage. Participates in signal transduction pathways that regulate the integrity of the glomerular slit diaphragm (an essential part of the glomerular filter of the kidney) by phosphorylating several slit diaphragm components including NPHS1, KIRREL1 and TRPC6. Plays a role in neural processes by phosphorylating DPYSL2, a multifunctional adapter protein within the central nervous system, ARHGAP32, a regulator for Rho family GTPases implicated in various neural functions, and SNCA, a small pre-synaptic protein. Involved in reelin signaling by mediating phosphorylation of DAB1 following reelin (RELN)-binding to its receptor. Participates in the downstream signaling pathways that lead to T-cell differentiation and proliferation following T-cell receptor (TCR) stimulation. Phosphorylates PTK2B/PYK2 in response to T-cell receptor activation. Also participates in negative feedback regulation of TCR signaling through phosphorylation of PAG1, thereby promoting interaction between PAG1 and CSK and recruitment of CSK to lipid rafts. CSK maintains LCK and FYN in an inactive form. Promotes CD28-induced phosphorylation of VAV1. In mast cells, phosphorylates CLNK after activation of immunoglobulin epsilon receptor signaling. Can also promote CD244-mediated NK cell activation. The sequence is that of Tyrosine-protein kinase Fyn (FYN) from Homo sapiens (Human).